We begin with the raw amino-acid sequence, 97 residues long: Small ribosomal subunit protein bS20 (97 aa).

The protein belongs to the bacterial ribosomal protein bS20 family.

In terms of biological role, binds directly to 16S ribosomal RNA. This is Small ribosomal subunit protein bS20 from Prochlorococcus marinus (strain MIT 9301).